The primary structure comprises 229 residues: uncharacterized protein (229 aa).

7 helical membrane passes run 21–41 (IYSL…LMLY), 56–76 (MIYY…SGAA), 83–103 (ALPI…FIIV), 109–129 (TVFQ…IIGV), 141–161 (AMFA…FIGS), 162–182 (GMMS…LIAS), and 202–222 (WAVA…ISLL).

This sequence belongs to the BI1 family.

It localises to the cell membrane. This is an uncharacterized protein from Streptococcus pyogenes serotype M3 (strain ATCC BAA-595 / MGAS315).